The chain runs to 164 residues: Sperm axonemal maintenance protein CFAP97D1 (164 aa).

Positions 61 to 88 (LSKIQGEQKRIDKIEYENRQLCQKIANA) form a coiled coil.

It belongs to the CFAP97 family. Expressed exclusively in testis.

Its function is as follows. Required for male fertility through its role in axonemal doublet stabilization which is essential for sperm motility and fertilization. The chain is Sperm axonemal maintenance protein CFAP97D1 (Cfap97d1) from Mus musculus (Mouse).